Consider the following 105-residue polypeptide: Thioredoxin (105 aa).

Residues valine 2–alanine 105 form the Thioredoxin domain. N6-acetyllysine is present on lysine 3. Lysine 8 carries the post-translational modification N6-succinyllysine. Catalysis depends on nucleophile residues cysteine 32 and cysteine 35. Cysteine 32 and cysteine 35 are oxidised to a cystine. An N6-acetyllysine modification is found at lysine 39. S-nitrosocysteine is present on residues cysteine 62 and cysteine 69. At cysteine 73 the chain carries S-nitrosocysteine; alternate. Residue lysine 94 is modified to N6-acetyllysine; alternate. Lysine 94 bears the N6-succinyllysine; alternate mark.

This sequence belongs to the thioredoxin family. As to quaternary structure, homodimer; disulfide-linked. Interacts with TXNIP through the redox-active site. Interacts with MAP3K5 and CASP3. Interacts with APEX1; the interaction stimulates the FOS/JUN AP-1 DNA-binding activity in a redox-dependent manner. In terms of processing, in the fully reduced protein, both Cys-69 and Cys-73 are nitrosylated in response to nitric oxide (NO). When two disulfide bonds are present in the protein, only Cys-73 is nitrosylated. Cys-73 can serve as donor for nitrosylation of target proteins.

It localises to the nucleus. The protein localises to the cytoplasm. It is found in the secreted. In terms of biological role, participates in various redox reactions through the reversible oxidation of its active center dithiol to a disulfide and catalyzes dithiol-disulfide exchange reactions. Plays a role in the reversible S-nitrosylation of cysteine residues in target proteins, and thereby contributes to the response to intracellular nitric oxide. Nitrosylates the active site Cys of CASP3 in response to nitric oxide (NO), and thereby inhibits caspase-3 activity. Induces the FOS/JUN AP-1 DNA binding activity in ionizing radiation (IR) cells through its oxidation/reduction status and stimulates AP-1 transcriptional activity. The protein is Thioredoxin (Txn) of Rattus norvegicus (Rat).